We begin with the raw amino-acid sequence, 273 residues long: Chlorophyll a-b binding protein 8, chloroplastic (273 aa).

The transit peptide at 1 to 32 (MATQALISSSSISTSAEAARQIIGSRISQSVT) directs the protein to the chloroplast. Arg33 carries the N2-acetylarginine modification. A chlorophyll b-binding site is contributed by Trp56. Residues Phe76, Ser82, and Glu100 each coordinate chlorophyll a. Arg105 is a chlorophyll b binding site. Residues 106–126 (FAMLGAAGAIAPEILGKAGLI) form a helical membrane-spanning segment. Chlorophyll b is bound by residues Ile140, Glu167, and Arg170. 6 residues coordinate chlorophyll a: Lys224, Glu225, Asn228, Arg230, Gln242, and His257. The helical transmembrane segment at 231–251 (LAMLAILGYFIQALVTGVGPY) threads the bilayer.

The protein belongs to the light-harvesting chlorophyll a/b-binding (LHC) protein family. The LHC complex consists of chlorophyll a-b binding proteins. Binds at least 14 chlorophylls (8 Chl-a and 6 Chl-b) and carotenoids such as lutein and neoxanthin. is required as a cofactor. In terms of processing, photoregulated by reversible phosphorylation of its threonine residues.

It is found in the plastid. The protein resides in the chloroplast thylakoid membrane. The light-harvesting complex (LHC) functions as a light receptor, it captures and delivers excitation energy to photosystems with which it is closely associated. This Solanum lycopersicum (Tomato) protein is Chlorophyll a-b binding protein 8, chloroplastic (CAB8).